The following is a 674-amino-acid chain: Sodium/hydrogen exchanger 1 (674 aa).

The N-terminal stretch at 1 to 24 is a signal peptide; the sequence is MKLNKSYILIVVLLLSLFYSSVSS. The interval 31-65 is disordered; the sequence is KSNNHYNSDNSNNDNKNININNNNDGDGDDDDDNN. Positions 37-55 are enriched in low complexity; that stretch reads NSDNSNNDNKNININNNND. The next 12 membrane-spanning stretches (helical) occupy residues 120-140, 144-164, 175-195, 213-233, 275-297, 314-334, 336-356, 359-379, 401-421, 432-452, 460-480, and 499-519; these read TIIF…YFII, IPFV…GIVF, VVSF…IFET, MFAV…IYIV, LYIL…YSVV, VVAI…SLIL, WINI…FSYM, VLAG…GITL, TAAF…LTAH, WSIL…CFLL, IPWV…FAFS, and NTLL…YPLL. The interval 591–674 is disordered; the sequence is HELDSNPLRF…NKNNDTLPLI (84 aa). Positions 601–618 are enriched in acidic residues; sequence DDDEEDDDDEDLDFDSDL. The segment covering 627–657 has biased composition (low complexity); sequence DSIHQSDNNNNDNGNNNNNNNNIIINNNSQH. The segment covering 662–674 has biased composition (polar residues); sequence GSNNKNNDTLPLI.

The protein belongs to the monovalent cation:proton antiporter 1 (CPA1) transporter (TC 2.A.36) family.

The protein resides in the membrane. With respect to regulation, LY294002, an inhibitor of the catalytic subunit of PI3-kinase, blocks NHE1-dependent (but not NHE1-independent) increase in intracellular pH in response to cAMP. Regulation of intracellular pH homeostasis in response to cAMP, which is essential for chemotaxis. Necessary for F-actin localization and the kinetics of actin polymerization during chemotaxis and cell polarity but not for directional sensing. In Dictyostelium discoideum (Social amoeba), this protein is Sodium/hydrogen exchanger 1 (nhe1).